Reading from the N-terminus, the 38-residue chain is Photosystem II reaction center protein L (38 aa).

A helical transmembrane segment spans residues 17-37 (SLFIGLLLVLVLALLFSSYFF).

This sequence belongs to the PsbL family. As to quaternary structure, PSII is composed of 1 copy each of membrane proteins PsbA, PsbB, PsbC, PsbD, PsbE, PsbF, PsbH, PsbI, PsbJ, PsbK, PsbL, PsbM, PsbT, PsbX, PsbY, PsbZ, Psb30/Ycf12, peripheral proteins PsbO, CyanoQ (PsbQ), PsbU, PsbV and a large number of cofactors. It forms dimeric complexes.

The protein localises to the cellular thylakoid membrane. In terms of biological role, one of the components of the core complex of photosystem II (PSII). PSII is a light-driven water:plastoquinone oxidoreductase that uses light energy to abstract electrons from H(2)O, generating O(2) and a proton gradient subsequently used for ATP formation. It consists of a core antenna complex that captures photons, and an electron transfer chain that converts photonic excitation into a charge separation. This subunit is found at the monomer-monomer interface and is required for correct PSII assembly and/or dimerization. The sequence is that of Photosystem II reaction center protein L from Acaryochloris marina (strain MBIC 11017).